A 386-amino-acid polypeptide reads, in one-letter code: S-adenosylmethionine synthase (386 aa).

E8 serves as a coordination point for Mg(2+). Residue H14 coordinates ATP. Residue E42 coordinates K(+). E55 and Q98 together coordinate L-methionine. Residues 166–168 (DGK), 234–237 (SGRF), D245, 251–252 (RK), A268, K272, and K276 each bind ATP. Residue D245 participates in L-methionine binding. K276 contributes to the L-methionine binding site.

The protein belongs to the AdoMet synthase family. As to quaternary structure, homotetramer. The cofactor is Mn(2+). It depends on Mg(2+) as a cofactor. Co(2+) is required as a cofactor. K(+) serves as cofactor.

It localises to the cytoplasm. The catalysed reaction is L-methionine + ATP + H2O = S-adenosyl-L-methionine + phosphate + diphosphate. It participates in amino-acid biosynthesis; S-adenosyl-L-methionine biosynthesis; S-adenosyl-L-methionine from L-methionine: step 1/1. In terms of biological role, catalyzes the formation of S-adenosylmethionine from methionine and ATP. The reaction comprises two steps that are both catalyzed by the same enzyme: formation of S-adenosylmethionine (AdoMet) and triphosphate, and subsequent hydrolysis of the triphosphate. This Ostreococcus tauri protein is S-adenosylmethionine synthase (METK).